A 90-amino-acid chain; its full sequence is uncharacterized protein (90 aa).

The N-terminal stretch at 1–18 (MSRALFAVVLAFPLIALA) is a signal peptide.

This is an uncharacterized protein from Escherichia coli (strain K12).